A 445-amino-acid polypeptide reads, in one-letter code: Phosphoglucosamine mutase (445 aa).

Ser104 functions as the Phosphoserine intermediate in the catalytic mechanism. Mg(2+) contacts are provided by Ser104, Asp243, Asp245, and Asp247. Ser104 carries the post-translational modification Phosphoserine.

Belongs to the phosphohexose mutase family. Requires Mg(2+) as cofactor. Activated by phosphorylation.

The enzyme catalyses alpha-D-glucosamine 1-phosphate = D-glucosamine 6-phosphate. Functionally, catalyzes the conversion of glucosamine-6-phosphate to glucosamine-1-phosphate. This is Phosphoglucosamine mutase from Neisseria subflava.